Consider the following 380-residue polypeptide: Lipid-A-disaccharide synthase (380 aa).

Belongs to the LpxB family.

It catalyses the reaction a lipid X + a UDP-2-N,3-O-bis[(3R)-3-hydroxyacyl]-alpha-D-glucosamine = a lipid A disaccharide + UDP + H(+). Its pathway is bacterial outer membrane biogenesis; LPS lipid A biosynthesis. Functionally, condensation of UDP-2,3-diacylglucosamine and 2,3-diacylglucosamine-1-phosphate to form lipid A disaccharide, a precursor of lipid A, a phosphorylated glycolipid that anchors the lipopolysaccharide to the outer membrane of the cell. This chain is Lipid-A-disaccharide synthase, found in Francisella tularensis subsp. tularensis (strain FSC 198).